A 238-amino-acid polypeptide reads, in one-letter code: Pyridoxine 5'-phosphate synthase (238 aa).

Position 7 (asparagine 7) interacts with 3-amino-2-oxopropyl phosphate. 9-10 (DH) lines the 1-deoxy-D-xylulose 5-phosphate pocket. A 3-amino-2-oxopropyl phosphate-binding site is contributed by arginine 18. Histidine 43 acts as the Proton acceptor in catalysis. 1-deoxy-D-xylulose 5-phosphate-binding residues include arginine 45 and histidine 50. Glutamate 70 acts as the Proton acceptor in catalysis. Threonine 100 is a 1-deoxy-D-xylulose 5-phosphate binding site. The Proton donor role is filled by histidine 190. Residues glycine 191 and 212–213 (GH) each bind 3-amino-2-oxopropyl phosphate.

This sequence belongs to the PNP synthase family. Homooctamer; tetramer of dimers.

It is found in the cytoplasm. It catalyses the reaction 3-amino-2-oxopropyl phosphate + 1-deoxy-D-xylulose 5-phosphate = pyridoxine 5'-phosphate + phosphate + 2 H2O + H(+). The protein operates within cofactor biosynthesis; pyridoxine 5'-phosphate biosynthesis; pyridoxine 5'-phosphate from D-erythrose 4-phosphate: step 5/5. Functionally, catalyzes the complicated ring closure reaction between the two acyclic compounds 1-deoxy-D-xylulose-5-phosphate (DXP) and 3-amino-2-oxopropyl phosphate (1-amino-acetone-3-phosphate or AAP) to form pyridoxine 5'-phosphate (PNP) and inorganic phosphate. In Prochlorococcus marinus (strain MIT 9515), this protein is Pyridoxine 5'-phosphate synthase.